The chain runs to 411 residues: Stearoyl-[acyl-carrier-protein] 9-desaturase 2, chloroplastic (411 aa).

The transit peptide at 1 to 44 directs the protein to the chloroplast; sequence MALLLNSTITVAMKQNPLVAVSFPRTTCLGSSFSPPRLLRVSCV. Glu148, Glu186, His189, Glu239, Glu272, and His275 together coordinate Fe cation.

It belongs to the fatty acid desaturase type 2 family. In terms of assembly, homodimer. Fe(2+) is required as a cofactor. Preferentially expressed in roots and flowers.

The protein resides in the plastid. It localises to the chloroplast. The catalysed reaction is octadecanoyl-[ACP] + 2 reduced [2Fe-2S]-[ferredoxin] + O2 + 2 H(+) = (9Z)-octadecenoyl-[ACP] + 2 oxidized [2Fe-2S]-[ferredoxin] + 2 H2O. The protein operates within lipid metabolism; fatty acid metabolism. In terms of biological role, converts stearoyl-ACP to oleoyl-ACP by introduction of a cis double bond between carbons 9 and 10 of the acyl chain. Exhibits delta-9 palmitoyl-[acyl-carrier-protein] desaturase (PAD) activity. Involved in omega-7 monounsaturated fatty acid biosynthesis, especially in the endosperm oil. This is Stearoyl-[acyl-carrier-protein] 9-desaturase 2, chloroplastic (S-ACP-DES2) from Arabidopsis thaliana (Mouse-ear cress).